A 336-amino-acid polypeptide reads, in one-letter code: Sodium/bile acid cotransporter 7 (336 aa).

Topologically, residues 1 to 10 (MGLIARVRKE) are cytoplasmic. A helical transmembrane segment spans residues 11–31 (WFIIGIVLVITFAKLQPSVGV). At 32-37 (KGGPLH) the chain is on the extracellular side. A helical transmembrane segment spans residues 38-58 (PEITITYVAVSVIFFNSGLSL). The Cytoplasmic portion of the chain corresponds to 59–71 (KTEELASALMHVK). Residues 72-92 (LHFFVQTFTLVFFPIAIWLLL) form a helical membrane-spanning segment. Over 93 to 116 (KVLALTAINEWLLRGLQTVACMPP) the chain is Extracellular. A helical membrane pass occupies residues 117–137 (PVSSAVILTKAVGGNEAAAIF). Residue Asn138 is a topological domain, cytoplasmic. A helical membrane pass occupies residues 139–159 (SAFGSFLGIVVTPLLLLVFLG). Residues 160-163 (SSSS) lie on the Extracellular side of the membrane. A helical transmembrane segment spans residues 164–184 (VPFTSIFSQLFMTVVVPLIVG). Residues 185 to 201 (QVCRRFLRECLDRRKPP) are Cytoplasmic-facing. Residues 202 to 222 (FGAVSSVVLLMIIYSTFCDTF) form a helical membrane-spanning segment. The Extracellular segment spans residues 223-233 (NNPNIELDHLS). Residues 234–254 (LLTVVFIIFSIQLSFMALIFF) traverse the membrane as a helical segment. Residues 255 to 270 (LSTRKSSGFSAADSVA) lie on the Cytoplasmic side of the membrane. Residues 271 to 291 (IMFCATHKSLTLGIPMLKIVF) traverse the membrane as a helical segment. The Extracellular portion of the chain corresponds to 292–298 (EGYEHLS). Residues 299–319 (LISVPLLIYHPAQILLGSVLL) form a helical membrane-spanning segment. The Cytoplasmic segment spans residues 320–336 (PSIKTWMSGRQKTLTPI).

This sequence belongs to the bile acid:sodium symporter (BASS) (TC 2.A.28) family.

Its subcellular location is the cell membrane. The protein resides in the endoplasmic reticulum membrane. The protein localises to the golgi apparatus membrane. Its function is as follows. Involved in teeth and skeletal development. Has an essential role in the biosynthesis and trafficking of glycosaminoglycans and glycoproteins to produce a proper functioning extracellular matrix. Required for extracellular matrix mineralization. Also involved in the regulation of cellular calcium homeostasis. Does not show transport activity towards bile acids or steroid sulfates. This is Sodium/bile acid cotransporter 7 (slc10a7) from Danio rerio (Zebrafish).